The primary structure comprises 256 residues: DNA repair protein RecO (256 aa).

It belongs to the RecO family.

In terms of biological role, involved in DNA repair and RecF pathway recombination. The chain is DNA repair protein RecO from Bartonella henselae (strain ATCC 49882 / DSM 28221 / CCUG 30454 / Houston 1) (Rochalimaea henselae).